A 439-amino-acid polypeptide reads, in one-letter code: L-cysteine:1D-myo-inositol 2-amino-2-deoxy-alpha-D-glucopyranoside ligase 2 (439 aa).

Cys-60 is a binding site for Zn(2+). L-cysteinyl-5'-AMP contacts are provided by residues 60–63 (CGIT), Thr-75, and 98–100 (NVT). The 'HIGH' region signature appears at 62–72 (ITPYDSTHLGH). The 'ERGGDP' region motif lies at 203 to 208 (ERGGDP). Trp-243 is an L-cysteinyl-5'-AMP binding site. Cys-247 lines the Zn(2+) pocket. An L-cysteinyl-5'-AMP-binding site is contributed by 265-267 (GVD). His-272 is a Zn(2+) binding site. Position 299 (Ile-299) interacts with L-cysteinyl-5'-AMP. Residues 305–309 (KMSKS) carry the 'KMSKS' region motif.

Belongs to the class-I aminoacyl-tRNA synthetase family. MshC subfamily. As to quaternary structure, monomer. Zn(2+) is required as a cofactor.

It catalyses the reaction 1D-myo-inositol 2-amino-2-deoxy-alpha-D-glucopyranoside + L-cysteine + ATP = 1D-myo-inositol 2-(L-cysteinylamino)-2-deoxy-alpha-D-glucopyranoside + AMP + diphosphate + H(+). Functionally, catalyzes the ATP-dependent condensation of GlcN-Ins and L-cysteine to form L-Cys-GlcN-Ins. This Corynebacterium urealyticum (strain ATCC 43042 / DSM 7109) protein is L-cysteine:1D-myo-inositol 2-amino-2-deoxy-alpha-D-glucopyranoside ligase 2.